The chain runs to 70 residues: Small ribosomal subunit protein bS21 (70 aa).

This sequence belongs to the bacterial ribosomal protein bS21 family.

This Laribacter hongkongensis (strain HLHK9) protein is Small ribosomal subunit protein bS21.